The following is a 399-amino-acid chain: Glutamyl-tRNA reductase (399 aa).

Substrate-binding positions include 45–48 (TCNR), Ser93, 98–100 (EDQ), and Gln104. Cys46 serves as the catalytic Nucleophile. 173–178 (GAGKMG) lines the NADP(+) pocket.

Belongs to the glutamyl-tRNA reductase family. As to quaternary structure, homodimer.

The enzyme catalyses (S)-4-amino-5-oxopentanoate + tRNA(Glu) + NADP(+) = L-glutamyl-tRNA(Glu) + NADPH + H(+). It functions in the pathway porphyrin-containing compound metabolism; protoporphyrin-IX biosynthesis; 5-aminolevulinate from L-glutamyl-tRNA(Glu): step 1/2. In terms of biological role, catalyzes the NADPH-dependent reduction of glutamyl-tRNA(Glu) to glutamate 1-semialdehyde (GSA). The polypeptide is Glutamyl-tRNA reductase (Methanobrevibacter smithii (strain ATCC 35061 / DSM 861 / OCM 144 / PS)).